Here is a 377-residue protein sequence, read N- to C-terminus: 1,3,6,8-tetrahydroxynaphthalene synthase (377 aa).

Cys-164 is a catalytic residue.

The protein belongs to the thiolase-like superfamily. Chalcone/stilbene synthases family. In terms of assembly, homodimer.

It carries out the reaction 5 malonyl-CoA + 5 H(+) = naphthalene-1,3,6,8-tetrol + 5 CO2 + 5 CoA + H2O. It functions in the pathway pigment biosynthesis; melanin biosynthesis. Its function is as follows. Involved in the biosynthesis of melanin but also various secondary metabolites containing a naphthoquinone ring. Catalyzes the iterative condensation of five CoA-linked malonyl units to form a pentaketide intermediate. THNS subsequently catalyzes the dual intramolecular Claisen and aldol condensations of this linear intermediate to produce the fused ring of 1,3,6,8-tetrahydroxynaphthalene (THN). The sequence is that of 1,3,6,8-tetrahydroxynaphthalene synthase from Streptomyces peucetius subsp. caesius.